The sequence spans 327 residues: Transaldolase (327 aa).

The active-site Schiff-base intermediate with substrate is the K132.

This sequence belongs to the transaldolase family. Type 1 subfamily. In terms of assembly, homodimer.

It is found in the cytoplasm. It carries out the reaction D-sedoheptulose 7-phosphate + D-glyceraldehyde 3-phosphate = D-erythrose 4-phosphate + beta-D-fructose 6-phosphate. It participates in carbohydrate degradation; pentose phosphate pathway; D-glyceraldehyde 3-phosphate and beta-D-fructose 6-phosphate from D-ribose 5-phosphate and D-xylulose 5-phosphate (non-oxidative stage): step 2/3. Transaldolase is important for the balance of metabolites in the pentose-phosphate pathway. The polypeptide is Transaldolase (Chlamydia caviae (strain ATCC VR-813 / DSM 19441 / 03DC25 / GPIC) (Chlamydophila caviae)).